We begin with the raw amino-acid sequence, 681 residues long: NAD(P)H-quinone oxidoreductase chain 5 (681 aa).

Transmembrane regions (helical) follow at residues 7–27, 39–59, 89–109, 120–140, 144–164, 188–208, 219–239, 258–278, 289–309, 327–347, 352–372, 395–415, 420–440, 509–529, 558–578, and 660–680; these read LAWL…IGLI, INAV…GALL, IDHL…LVMI, GYVR…GLVI, LVQV…LIGF, GLLL…FGTI, GVLS…GPVA, TPIS…FLVA, VVMN…ATIA, LGYM…FHLM, FKAM…GVVG, ATCF…AGFW, ILGL…ATAG, LTMT…GLLG, FYVM…VASL, and AQFY…VFSL.

It belongs to the complex I subunit 5 family.

It is found in the cell membrane. The catalysed reaction is a plastoquinone + NADH + (n+1) H(+)(in) = a plastoquinol + NAD(+) + n H(+)(out). It catalyses the reaction a plastoquinone + NADPH + (n+1) H(+)(in) = a plastoquinol + NADP(+) + n H(+)(out). In terms of biological role, NDH-1 shuttles electrons from NAD(P)H, via FMN and iron-sulfur (Fe-S) centers, to quinones in the respiratory chain. The immediate electron acceptor for the enzyme in this species is believed to be plastoquinone. Couples the redox reaction to proton translocation (for every two electrons transferred, four hydrogen ions are translocated across the cytoplasmic membrane), and thus conserves the redox energy in a proton gradient. The sequence is that of NAD(P)H-quinone oxidoreductase chain 5 (ndhF) from Synechocystis sp. (strain ATCC 27184 / PCC 6803 / Kazusa).